The sequence spans 396 residues: Flavohemoprotein (396 aa).

Positions 1-136 (MLDTQTIAIV…LADVFIQRES (136 aa)) constitute a Globin domain. Residue H85 participates in heme b binding. Residues Y95 and E135 each act as charge relay system in the active site. Positions 147–396 (GGWRTLRRFR…YECFGPHKVI (250 aa)) are reductase. Positions 150–255 (RTLRRFRIIK…APPRGDFFLD (106 aa)) constitute an FAD-binding FR-type domain. FAD is bound by residues Y188 and 204–207 (RQYS). 268-273 (GVGQTP) contributes to the NADP(+) binding site. 389 to 392 (CFGP) lines the FAD pocket.

It belongs to the globin family. Two-domain flavohemoproteins subfamily. The protein in the C-terminal section; belongs to the flavoprotein pyridine nucleotide cytochrome reductase family. It depends on heme b as a cofactor. FAD is required as a cofactor.

The catalysed reaction is 2 nitric oxide + NADPH + 2 O2 = 2 nitrate + NADP(+) + H(+). It carries out the reaction 2 nitric oxide + NADH + 2 O2 = 2 nitrate + NAD(+) + H(+). Functionally, is involved in NO detoxification in an aerobic process, termed nitric oxide dioxygenase (NOD) reaction that utilizes O(2) and NAD(P)H to convert NO to nitrate, which protects the bacterium from various noxious nitrogen compounds. Therefore, plays a central role in the inducible response to nitrosative stress. This is Flavohemoprotein from Yersinia pestis.